The sequence spans 435 residues: Oocyte zinc finger protein XlCOF22 (435 aa).

The disordered stretch occupies residues 71–92 (NANTSAHFSRNRDSDKHERTHT). Basic and acidic residues predominate over residues 80–91 (RNRDSDKHERTH). 12 consecutive C2H2-type zinc fingers follow at residues 97–120 (HSCS…RQSH), 126–148 (FSCS…QRTH), 154–176 (FCCF…RRTH), 182–204 (FSCL…QRTH), 210–232 (FSCL…QRTH), 238–260 (FSCL…QRTH), 266–288 (FSCF…QRTH), 294–316 (FSCS…QRTH), 322–345 (YSCS…RRTH), 351–373 (FSCS…QRTH), 379–402 (FSCS…RQTH), and 408–430 (VSCS…FKIH).

This sequence belongs to the krueppel C2H2-type zinc-finger protein family.

The protein localises to the nucleus. Functionally, may be involved in transcriptional regulation. This chain is Oocyte zinc finger protein XlCOF22, found in Xenopus laevis (African clawed frog).